The following is a 906-amino-acid chain: Aconitate hydratase A (906 aa).

Residues 1-2 (MS) constitute a propeptide that is removed on maturation. [4Fe-4S] cluster contacts are provided by C441, C507, and C510.

It belongs to the aconitase/IPM isomerase family. Monomer. It depends on [4Fe-4S] cluster as a cofactor.

The catalysed reaction is citrate = D-threo-isocitrate. The enzyme catalyses (2S,3R)-3-hydroxybutane-1,2,3-tricarboxylate = 2-methyl-cis-aconitate + H2O. It participates in carbohydrate metabolism; tricarboxylic acid cycle; isocitrate from oxaloacetate: step 2/2. Its pathway is organic acid metabolism; propanoate degradation. Functionally, involved in the catabolism of short chain fatty acids (SCFA) via the tricarboxylic acid (TCA)(acetyl degradation route) and probably the 2-methylcitrate cycle I (propionate degradation route). Catalyzes the reversible isomerization of citrate to isocitrate via cis-aconitate. Could catalyze the hydration of 2-methyl-cis-aconitate to yield (2R,3S)-2-methylisocitrate. The apo form of AcnA functions as a RNA-binding regulatory protein. The sequence is that of Aconitate hydratase A (acn) from Deinococcus radiodurans (strain ATCC 13939 / DSM 20539 / JCM 16871 / CCUG 27074 / LMG 4051 / NBRC 15346 / NCIMB 9279 / VKM B-1422 / R1).